We begin with the raw amino-acid sequence, 244 residues long: 3-deoxy-manno-octulosonate cytidylyltransferase (244 aa).

This sequence belongs to the KdsB family.

It is found in the cytoplasm. It catalyses the reaction 3-deoxy-alpha-D-manno-oct-2-ulosonate + CTP = CMP-3-deoxy-beta-D-manno-octulosonate + diphosphate. The protein operates within nucleotide-sugar biosynthesis; CMP-3-deoxy-D-manno-octulosonate biosynthesis; CMP-3-deoxy-D-manno-octulosonate from 3-deoxy-D-manno-octulosonate and CTP: step 1/1. It participates in bacterial outer membrane biogenesis; lipopolysaccharide biosynthesis. Its function is as follows. Activates KDO (a required 8-carbon sugar) for incorporation into bacterial lipopolysaccharide in Gram-negative bacteria. The polypeptide is 3-deoxy-manno-octulosonate cytidylyltransferase (Synechococcus elongatus (strain ATCC 33912 / PCC 7942 / FACHB-805) (Anacystis nidulans R2)).